We begin with the raw amino-acid sequence, 449 residues long: Tubulin beta-4 chain (449 aa).

Residues 1-4 (MREI) carry the MREI motif motif. GTP is bound by residues Q11, E69, S138, G142, T143, G144, N204, and N226. E69 contacts Mg(2+). Residues 421-449 (EYQQYQDATAEEEGEMYEDDEEESEQGAK) are disordered. Positions 429–449 (TAEEEGEMYEDDEEESEQGAK) are enriched in acidic residues. At E438 the chain carries 5-glutamyl polyglutamate. Phosphoserine is present on S444.

The protein belongs to the tubulin family. As to quaternary structure, dimer of alpha and beta chains. A typical microtubule is a hollow water-filled tube with an outer diameter of 25 nm and an inner diameter of 15 nM. Alpha-beta heterodimers associate head-to-tail to form protofilaments running lengthwise along the microtubule wall with the beta-tubulin subunit facing the microtubule plus end conferring a structural polarity. Microtubules usually have 13 protofilaments but different protofilament numbers can be found in some organisms and specialized cells. Mg(2+) serves as cofactor. Post-translationally, some glutamate residues at the C-terminus are polyglycylated, resulting in polyglycine chains on the gamma-carboxyl group. Glycylation is mainly limited to tubulin incorporated into axonemes (cilia and flagella) whereas glutamylation is prevalent in neuronal cells, centrioles, axonemes, and the mitotic spindle. Both modifications can coexist on the same protein on adjacent residues, and lowering polyglycylation levels increases polyglutamylation, and reciprocally. The precise function of polyglycylation is still unclear. Some glutamate residues at the C-terminus are polyglutamylated, resulting in polyglutamate chains on the gamma-carboxyl group. Polyglutamylation plays a key role in microtubule severing by spastin (SPAST). SPAST preferentially recognizes and acts on microtubules decorated with short polyglutamate tails: severing activity by SPAST increases as the number of glutamates per tubulin rises from one to eight, but decreases beyond this glutamylation threshold. As to expression, neuron specific.

The protein resides in the cytoplasm. It is found in the cytoskeleton. In terms of biological role, tubulin is the major constituent of microtubules, a cylinder consisting of laterally associated linear protofilaments composed of alpha- and beta-tubulin heterodimers. Microtubules grow by the addition of GTP-tubulin dimers to the microtubule end, where a stabilizing cap forms. Below the cap, tubulin dimers are in GDP-bound state, owing to GTPase activity of alpha-tubulin. This chain is Tubulin beta-4 chain, found in Gallus gallus (Chicken).